Consider the following 122-residue polypeptide: Probable dihydroneopterin aldolase (122 aa).

Substrate-binding positions include Glu-21, Tyr-54, and 73 to 74 (LE). Lys-101 serves as the catalytic Proton donor/acceptor.

Belongs to the DHNA family.

The enzyme catalyses 7,8-dihydroneopterin = 6-hydroxymethyl-7,8-dihydropterin + glycolaldehyde. The protein operates within cofactor biosynthesis; tetrahydrofolate biosynthesis; 2-amino-4-hydroxy-6-hydroxymethyl-7,8-dihydropteridine diphosphate from 7,8-dihydroneopterin triphosphate: step 3/4. Catalyzes the conversion of 7,8-dihydroneopterin to 6-hydroxymethyl-7,8-dihydropterin. The polypeptide is Probable dihydroneopterin aldolase (folB) (Chlamydia muridarum (strain MoPn / Nigg)).